Reading from the N-terminus, the 89-residue chain is Islet amyloid polypeptide (89 aa).

A signal peptide spans M1 to A22. The propeptide occupies T23–E31. C35 and C40 are joined by a disulfide. Y70 carries the post-translational modification Tyrosine amide. A propeptide spanning residues S74–F89 is cleaved from the precursor.

Belongs to the calcitonin family. In terms of assembly, can form homodimers. Interacts with IDE and INS. Interaction with INS inhibits homodimerization and fibril formation.

It localises to the secreted. Functionally, amylin/IAPP is a glucoregulatory peptide hormone that plays an important role in the regulation of energy homeostasis. Selectively inhibits insulin-stimulated glucose utilization and glycogen deposition in muscle, while not affecting adipocyte glucose metabolism. IAPP function is mediated by the CALCR-RAMPs (AMYRs) receptor complexes. Amylin can also bind CALCR receptor in the absence of RAMPs, although it is more selective for AMYRs. The chain is Islet amyloid polypeptide (IAPP) from Felis catus (Cat).